A 188-amino-acid chain; its full sequence is Cell division protein SepF (188 aa).

The tract at residues Glu29 to Pro53 is disordered.

This sequence belongs to the SepF family. Homodimer. Interacts with FtsZ.

It is found in the cytoplasm. In terms of biological role, cell division protein that is part of the divisome complex and is recruited early to the Z-ring. Probably stimulates Z-ring formation, perhaps through the cross-linking of FtsZ protofilaments. Its function overlaps with FtsA. The chain is Cell division protein SepF from Synechococcus sp. (strain CC9902).